Consider the following 1207-residue polypeptide: Protein STU1 (1207 aa).

Disordered regions lie at residues Glu-504–Ser-525, Glu-549–Leu-730, Ala-789–Gln-856, Ala-869–Glu-928, and Ser-1086–Ala-1105. The span at Ser-576–Ser-594 shows a compositional bias: low complexity. Composition is skewed to polar residues over residues Ser-605–Ser-624, Gly-653–Lys-672, and Ala-684–Thr-710. Low complexity-rich tracts occupy residues Ala-711–Ala-724 and Ser-791–Ser-806. Positions Ala-869–Val-878 are enriched in basic and acidic residues. Composition is skewed to polar residues over residues Asn-895–Gly-905 and Thr-919–Glu-928.

Belongs to the CLASP family. As to quaternary structure, interacts with microtubules.

It localises to the cytoplasm. The protein resides in the cytoskeleton. The protein localises to the nucleus. Its subcellular location is the spindle. Microtubule binding protein that promotes the stabilization of dynamic microtubules. Required for mitotic spindle formation. The chain is Protein STU1 (STU1) from Phaeosphaeria nodorum (strain SN15 / ATCC MYA-4574 / FGSC 10173) (Glume blotch fungus).